Consider the following 244-residue polypeptide: MNKVEGGGHKEEVVVKEKEVVKEKPSEATAEGVQAGEAKDLPGSLKTQRRKAHREHPPEVLSKLHPLQYRWVLWFFKNDRSRAWQDNLQLVTKFNTVEDFWAVYSHIKLASKLSSGCDYALFKEGILPMWEDNRNKQGGRWLLSIDKQLRHFELDRLWLETLLCLVGNCFEEYSREVCGAVVNIRTKRDKIALWTSEAEDKAGVMQIGQIYKERLGISTKTIIGYQAHADTAAKSNNLANKFVV.

Basic and acidic residues predominate over residues 1-26; the sequence is MNKVEGGGHKEEVVVKEKEVVKEKPS. The tract at residues 1–57 is disordered; sequence MNKVEGGGHKEEVVVKEKEVVKEKPSEATAEGVQAGEAKDLPGSLKTQRRKAHREHP. The EIF4EBP1/2/3 binding stretch occupies residues 65–68; it reads HPLQ. 84–85 contacts mRNA; it reads WQ. The segment at 101-105 is EIF4EBP1/2/3 binding; it reads WAVYS. 130–131 is an mRNA binding site; that stretch reads WE. An EIF4EBP1/2/3 binding region spans residues 160 to 167; the sequence is ETLLCLVG. MRNA-binding positions include 185 to 190 and 233 to 235; these read RTKRDK and AKS.

The protein belongs to the eukaryotic initiation factor 4E family. EIF4F is a multi-subunit complex, the composition of which varies with external and internal environmental conditions. It is composed of at least EIF4A, EIF4E and EIF4G.

Recognizes and binds the 7-methylguanosine-containing mRNA cap during an early step in the initiation of protein synthesis and facilitates ribosome binding by inducing the unwinding of the mRNAs secondary structures. The sequence is that of Eukaryotic translation initiation factor 4E type 1B (Eif4e1b) from Mus musculus (Mouse).